Consider the following 80-residue polypeptide: Sulfur carrier protein TusA (80 aa).

The active-site Cysteine persulfide intermediate is the Cys-17.

This sequence belongs to the sulfur carrier protein TusA family.

Its subcellular location is the cytoplasm. In terms of biological role, sulfur carrier protein which probably makes part of a sulfur-relay system. The protein is Sulfur carrier protein TusA of Pseudomonas entomophila (strain L48).